A 343-amino-acid chain; its full sequence is S-adenosylmethionine:tRNA ribosyltransferase-isomerase (343 aa).

Belongs to the QueA family. In terms of assembly, monomer.

It localises to the cytoplasm. It catalyses the reaction 7-aminomethyl-7-carbaguanosine(34) in tRNA + S-adenosyl-L-methionine = epoxyqueuosine(34) in tRNA + adenine + L-methionine + 2 H(+). The protein operates within tRNA modification; tRNA-queuosine biosynthesis. Functionally, transfers and isomerizes the ribose moiety from AdoMet to the 7-aminomethyl group of 7-deazaguanine (preQ1-tRNA) to give epoxyqueuosine (oQ-tRNA). The chain is S-adenosylmethionine:tRNA ribosyltransferase-isomerase from Dehalococcoides mccartyi (strain CBDB1).